A 913-amino-acid polypeptide reads, in one-letter code: Protein translocase subunit SecA (913 aa).

ATP-binding positions include Q87, 105–109 (GEGKT), and D512. The Zn(2+) site is built by C897, C899, C908, and H909.

It belongs to the SecA family. As to quaternary structure, monomer and homodimer. Part of the essential Sec protein translocation apparatus which comprises SecA, SecYEG and auxiliary proteins SecDF-YajC and YidC. The cofactor is Zn(2+).

The protein localises to the cell inner membrane. Its subcellular location is the cytoplasm. It carries out the reaction ATP + H2O + cellular proteinSide 1 = ADP + phosphate + cellular proteinSide 2.. In terms of biological role, part of the Sec protein translocase complex. Interacts with the SecYEG preprotein conducting channel. Has a central role in coupling the hydrolysis of ATP to the transfer of proteins into and across the cell membrane, serving both as a receptor for the preprotein-SecB complex and as an ATP-driven molecular motor driving the stepwise translocation of polypeptide chains across the membrane. In Pseudomonas syringae pv. syringae (strain B728a), this protein is Protein translocase subunit SecA.